Consider the following 546-residue polypeptide: Cryptochrome DASH, chloroplastic/mitochondrial (546 aa).

The region spanning 4 to 151 is the Photolyase/cryptochrome alpha/beta domain; sequence TRVVIWFRND…TMERHWGSTL (148 aa). A disordered region spans residues 497–546; it reads PRRDFTEMGSPPGPRRGGGGGGRGRGRPGGSTPNRGTKARVASVYDTVYG. Gly residues predominate over residues 511-525; it reads RRGGGGGGRGRGRPG.

This sequence belongs to the DNA photolyase class-1 family. Requires FAD as cofactor. The cofactor is (6R)-5,10-methylene-5,6,7,8-tetrahydrofolate.

The protein resides in the plastid. It is found in the chloroplast. Its subcellular location is the mitochondrion. In terms of biological role, may have a photoreceptor function. Binds ss- and ds-DNA in a sequence non-specific manner, lacks photolyase activity. In Ostreococcus tauri, this protein is Cryptochrome DASH, chloroplastic/mitochondrial.